Here is an 834-residue protein sequence, read N- to C-terminus: Leucine--tRNA ligase (834 aa).

The short motif at 42–52 (PYPSGKLHMGH) is the 'HIGH' region element. The 'KMSKS' region motif lies at 619–623 (KMSKS). ATP is bound at residue Lys-622.

The protein belongs to the class-I aminoacyl-tRNA synthetase family.

The protein localises to the cytoplasm. The enzyme catalyses tRNA(Leu) + L-leucine + ATP = L-leucyl-tRNA(Leu) + AMP + diphosphate. This Actinobacillus pleuropneumoniae serotype 7 (strain AP76) protein is Leucine--tRNA ligase.